The sequence spans 296 residues: m7GpppN-mRNA hydrolase NUDT17 (296 aa).

One can recognise a Nudix hydrolase domain in the interval 90–236 (GRGVDVGVAV…DSGSPCGPLP (147 aa)). The Nudix box motif lies at 129–150 (GHVELGEQLLEAGLRELQEETG). Residues E144 and E148 each contribute to the Mg(2+) site.

This sequence belongs to the Nudix hydrolase family. Requires Mg(2+) as cofactor. The cofactor is Mn(2+).

It catalyses the reaction a 5'-end (N(7)-methyl 5'-triphosphoguanosine)-ribonucleoside in mRNA + H2O = N(7)-methyl-GDP + a 5'-end phospho-ribonucleoside in mRNA + 2 H(+). Functionally, acts as a decapping enzyme capable of hydrolyzing monomethylated capped RNAs (in vitro). Hydrolyzes monomethylated capped RNA after alpha and beta phosphates to form N(7)-methyl-GDP. Shows low activity towards unmethylated capped RNA. The chain is m7GpppN-mRNA hydrolase NUDT17 (nudt17) from Xenopus laevis (African clawed frog).